A 267-amino-acid chain; its full sequence is Glutamate 5-kinase (267 aa).

An ATP-binding site is contributed by Lys-18. Positions 58, 145, and 157 each coordinate substrate. Residues 177–178 and 219–225 contribute to the ATP site; these read SD and TGGMATK.

It belongs to the glutamate 5-kinase family.

Its subcellular location is the cytoplasm. It catalyses the reaction L-glutamate + ATP = L-glutamyl 5-phosphate + ADP. It participates in amino-acid biosynthesis; L-proline biosynthesis; L-glutamate 5-semialdehyde from L-glutamate: step 1/2. Functionally, catalyzes the transfer of a phosphate group to glutamate to form L-glutamate 5-phosphate. This chain is Glutamate 5-kinase, found in Clostridium tetani (strain Massachusetts / E88).